The following is a 182-amino-acid chain: Large ribosomal subunit protein uL5c (182 aa).

Belongs to the universal ribosomal protein uL5 family. Part of the 50S ribosomal subunit; contacts the 5S rRNA.

The protein localises to the plastid. Its subcellular location is the chloroplast. Binds 5S rRNA, forms part of the central protuberance of the 50S subunit. This chain is Large ribosomal subunit protein uL5c (rpl5), found in Cyanidium caldarium (Red alga).